A 441-amino-acid polypeptide reads, in one-letter code: Glutamate-1-semialdehyde 2,1-aminomutase (441 aa).

At Lys275 the chain carries N6-(pyridoxal phosphate)lysine.

It belongs to the class-III pyridoxal-phosphate-dependent aminotransferase family. HemL subfamily. Homodimer. The cofactor is pyridoxal 5'-phosphate.

It localises to the cytoplasm. The catalysed reaction is (S)-4-amino-5-oxopentanoate = 5-aminolevulinate. It participates in porphyrin-containing compound metabolism; protoporphyrin-IX biosynthesis; 5-aminolevulinate from L-glutamyl-tRNA(Glu): step 2/2. In Deinococcus deserti (strain DSM 17065 / CIP 109153 / LMG 22923 / VCD115), this protein is Glutamate-1-semialdehyde 2,1-aminomutase.